Consider the following 148-residue polypeptide: MNLTKLLPAFAAAVVLSACAKDAPEMTKSSAQIAEMQTLPTITDKTVVYSCNKQTVTAVYQFENQEPVAAMVSVGDGIIAKDFTRDKSQNDFTSFVSGDYVWNVDSGLTLDKFDSVVPVNLIQKGKSSDNIIVKNCDVNVKATKKANL.

A signal peptide spans 1-20; it reads MNLTKLLPAFAAAVVLSACA.

This is an uncharacterized protein from Haemophilus influenzae (strain ATCC 51907 / DSM 11121 / KW20 / Rd).